A 334-amino-acid polypeptide reads, in one-letter code: Holliday junction branch migration complex subunit RuvB (334 aa).

Positions Met-1–Thr-181 are large ATPase domain (RuvB-L). ADP contacts are provided by Leu-19 and Arg-20. Residues Glu-26, Phe-27, and Ile-28 each contribute to the ATP site. Phe-27, Ile-28, Gly-61, Leu-62, Gly-63, Lys-64, Thr-65, and Thr-66 together coordinate ADP. ATP-binding residues include Leu-62 and Gly-63. ATP-binding positions include Glu-127 to Phe-129 and Arg-170. Residues Tyr-180, Pro-216, and Arg-217 each coordinate ADP. A small ATPAse domain (RuvB-S) region spans residues Val-182 to Glu-255. Residue Pro-216 coordinates ATP. A head domain (RuvB-H) region spans residues Gly-256–Phe-334. DNA contacts are provided by Arg-309 and Arg-314.

It belongs to the RuvB family. In terms of assembly, homohexamer. Forms an RuvA(8)-RuvB(12)-Holliday junction (HJ) complex. HJ DNA is sandwiched between 2 RuvA tetramers; dsDNA enters through RuvA and exits via RuvB. An RuvB hexamer assembles on each DNA strand where it exits the tetramer. Each RuvB hexamer is contacted by two RuvA subunits (via domain III) on 2 adjacent RuvB subunits; this complex drives branch migration. In the full resolvosome a probable DNA-RuvA(4)-RuvB(12)-RuvC(2) complex forms which resolves the HJ.

It is found in the cytoplasm. It catalyses the reaction ATP + H2O = ADP + phosphate + H(+). Functionally, the RuvA-RuvB-RuvC complex processes Holliday junction (HJ) DNA during genetic recombination and DNA repair, while the RuvA-RuvB complex plays an important role in the rescue of blocked DNA replication forks via replication fork reversal (RFR). RuvA specifically binds to HJ cruciform DNA, conferring on it an open structure. The RuvB hexamer acts as an ATP-dependent pump, pulling dsDNA into and through the RuvAB complex. RuvB forms 2 homohexamers on either side of HJ DNA bound by 1 or 2 RuvA tetramers; 4 subunits per hexamer contact DNA at a time. Coordinated motions by a converter formed by DNA-disengaged RuvB subunits stimulates ATP hydrolysis and nucleotide exchange. Immobilization of the converter enables RuvB to convert the ATP-contained energy into a lever motion, pulling 2 nucleotides of DNA out of the RuvA tetramer per ATP hydrolyzed, thus driving DNA branch migration. The RuvB motors rotate together with the DNA substrate, which together with the progressing nucleotide cycle form the mechanistic basis for DNA recombination by continuous HJ branch migration. Branch migration allows RuvC to scan DNA until it finds its consensus sequence, where it cleaves and resolves cruciform DNA. Its function is as follows. Promotes Holliday junction (HJ) branch migration in conjunction with RuvA. Subunits can be free, ADP- or ATP-bound; nucleotide binding changes during the reaction cycle. Has a DNA-dependent ATPase activity; dsDNA and supercoiled DNA but not ssDNA stimulate activity. This Thermotoga maritima (strain ATCC 43589 / DSM 3109 / JCM 10099 / NBRC 100826 / MSB8) protein is Holliday junction branch migration complex subunit RuvB.